A 161-amino-acid polypeptide reads, in one-letter code: Small ribosomal subunit protein uS9 (161 aa).

It belongs to the universal ribosomal protein uS9 family.

This Rickettsia felis (strain ATCC VR-1525 / URRWXCal2) (Rickettsia azadi) protein is Small ribosomal subunit protein uS9.